The primary structure comprises 443 residues: Putative F-box/FBD/LRR-repeat protein At3g49030 (443 aa).

Residues 20–68 form the F-box domain; sequence EDRISELPEDLLLQILSDIPTENVIATSVLSKRWRSLWKMVPNLTFDFT. LRR repeat units lie at residues 74–100, 152–179, 180–205, 218–252, 272–297, and 320–345; these read HQTF…QLNF, ILEI…RLYE, VHFK…SVHR, VPSL…NIVG, ISDV…SLES, and KERE…KLTG. Positions 357-408 constitute an FBD domain; the sequence is NWNPPKCVPECLLFHLEKFLWTGYEWQRGDEKEVATYILENARLLKKATFST.

In Arabidopsis thaliana (Mouse-ear cress), this protein is Putative F-box/FBD/LRR-repeat protein At3g49030.